The primary structure comprises 175 residues: ADP-ribosylation factor 6 (175 aa).

The N-myristoyl glycine moiety is linked to residue G2. Residues G20–T27, D63–Q67, and N122–D125 each bind GTP.

Belongs to the small GTPase superfamily. Arf family. As to expression, expressed in the head (at protein level).

It is found in the golgi apparatus. Activation is generally mediated by a guanine exchange factor (GEF), while inactivation through hydrolysis of bound GTP is catalyzed by a GTPase activating protein (GAP). May be activated by Efa6. GTP-binding protein involved in protein trafficking; may modulate vesicle budding and uncoating within the Golgi apparatus. Promotes cell movement and remodeling of the actin cytoskeleton during compound eye morphogenesis. Required for normal ethanol-induced tolerance and preference. Probably after Efa6-mediated activation, counteracts ethanol-induced sedation. This is ADP-ribosylation factor 6 from Drosophila melanogaster (Fruit fly).